The sequence spans 526 residues: Probable Xaa-Pro aminopeptidase GLRG_02280 (526 aa).

D285, D296, E454, and E495 together coordinate Mn(2+).

Belongs to the peptidase M24B family. Mn(2+) is required as a cofactor.

It catalyses the reaction Release of any N-terminal amino acid, including proline, that is linked to proline, even from a dipeptide or tripeptide.. In terms of biological role, catalyzes the removal of a penultimate prolyl residue from the N-termini of peptides. This chain is Probable Xaa-Pro aminopeptidase GLRG_02280, found in Colletotrichum graminicola (strain M1.001 / M2 / FGSC 10212) (Maize anthracnose fungus).